We begin with the raw amino-acid sequence, 477 residues long: Leukotoxin export protein LtxD (477 aa).

Residues 64 to 84 (IMLFLTLAIIVSIFSNVEIIA) traverse the membrane as a helical segment. Residues 206-287 (LNLNKKEAEK…ENEVLLAKEE (82 aa)) are a coiled coil.

Belongs to the membrane fusion protein (MFP) (TC 8.A.1) family. As to quaternary structure, probably part of a complex composed of LtxB, LtxD and TdeA, which forms a single transport channel across the two membranes.

The protein localises to the cell inner membrane. In terms of biological role, involved in the export of the LtxA leukotoxin. In Aggregatibacter actinomycetemcomitans (Actinobacillus actinomycetemcomitans), this protein is Leukotoxin export protein LtxD.